Reading from the N-terminus, the 294-residue chain is Small ribosomal subunit protein uS3 (294 aa).

Residues 39–107 (VREYLKTKLK…PVAVNIEEVR (69 aa)) form the KH type-2 domain. Residues 210–294 (RNDLPAVETP…AAPAADVKGE (85 aa)) form a disordered region. The segment covering 219-238 (PRPDEERRPRGPRRDGRPGG) has biased composition (basic and acidic residues). Composition is skewed to low complexity over residues 249-258 (RPAAGNSAPA) and 281-294 (VAAP…VKGE).

This sequence belongs to the universal ribosomal protein uS3 family. In terms of assembly, part of the 30S ribosomal subunit. Forms a tight complex with proteins S10 and S14.

Its function is as follows. Binds the lower part of the 30S subunit head. Binds mRNA in the 70S ribosome, positioning it for translation. The chain is Small ribosomal subunit protein uS3 from Verminephrobacter eiseniae (strain EF01-2).